Here is a 390-residue protein sequence, read N- to C-terminus: MPPSGLRLLPLLLPLLWLLVLTPGRPAAGLSTCKTIDMELVKRKRIEAIRGQILSKLRLASPPSQGEVPPGPLPEAVLALYNSTRDRVAGESAEPEPEPEADYYAKEVTRVLMVETTNRIYDKIKKSPHSIYMLFNTSELREAVPEPVLLSRAELRLLRLKLKVEQHVELYQKYSNNSWRYLSNRLLAPSDSPEWLSFDVTGVVRQWLSRGGEIEGFRLSAHCSCDSRDNTLQVDINGLSSSRRGDLATIHGMNRPFLLLMATPLERAQHLHTSRHRRALDTNYCFSSTEKNCCVRQLYIDFRKDLGWKWIHEPKGYHANFCLGPCPYIWSLDTQYSKVLALYNQHNPGASAAPCCVPQALEPLPIVYYVGRKPKVEQLSNMIVRSCKCS.

The N-terminal stretch at 1–29 (MPPSGLRLLPLLLPLLWLLVLTPGRPAAG) is a signal peptide. The straightjacket domain stretch occupies residues 30–74 (LSTCKTIDMELVKRKRIEAIRGQILSKLRLASPPSQGEVPPGPLP). The tract at residues 75–271 (EAVLALYNST…ATPLERAQHL (197 aa)) is arm domain. Asn82, Asn136, and Asn176 each carry an N-linked (GlcNAc...) asparagine glycan. The bowtie tail stretch occupies residues 226-252 (DSRDNTLQVDINGLSSSRRGDLATIHG). The Cell attachment site motif lies at 244 to 246 (RGD). 4 disulfides stabilise this stretch: Cys285/Cys294, Cys293/Cys356, Cys322/Cys387, and Cys326/Cys389.

Belongs to the TGF-beta family. In terms of assembly, homodimer; disulfide-linked. Interacts with the serine proteases, HTRA1 and HTRA3: the interaction with either inhibits TGFB1-mediated signaling and the HTRA protease activity is required for this inhibition. May interact with THSD4; this interaction may lead to sequestration by FBN1 microfibril assembly and attenuation of TGFB signaling. Interacts with CD109, DPT and ASPN. Interacts with EFEMP2. Interacts with TSKU; the interaction contributes to regulation of the hair cycle. Interacts with TGFBR3. Homodimer; disulfide-linked. Interacts with transforming growth factor beta-1 (TGF-beta-1) chain; interaction is non-covalent and maintains TGF-beta-1 in a latent state; each latency-associated peptide (LAP) monomer interacts with TGF-beta-1 in the other monomer. Interacts with LTBP1; leading to regulation of TGF-beta-1 activation. Interacts with LRRC32/GARP; leading to regulation of TGF-beta-1 activation on the surface of activated regulatory T-cells (Tregs). Interacts with LRRC33/NRROS; leading to regulation of TGF-beta-1 activation in macrophages and microglia. Interacts (via cell attachment site) with integrins ITGAV and ITGB6 (ITGAV:ITGB6), leading to release of the active TGF-beta-1. Interacts with NREP; the interaction results in a decrease in TGFB1 autoinduction. Interacts with HSP90AB1; inhibits latent TGFB1 activation. As to quaternary structure, homodimer; disulfide-linked. Interacts with TGF-beta receptors (TGFBR1 and TGFBR2), leading to signal transduction. Post-translationally, transforming growth factor beta-1 proprotein: The precursor proprotein is cleaved in the Golgi apparatus by FURIN to form Transforming growth factor beta-1 (TGF-beta-1) and Latency-associated peptide (LAP) chains, which remain non-covalently linked, rendering TGF-beta-1 inactive. In terms of processing, N-glycosylated. Deglycosylation leads to activation of Transforming growth factor beta-1 (TGF-beta-1); mechanisms triggering deglycosylation-driven activation of TGF-beta-1 are however unclear.

It localises to the secreted. It is found in the extracellular space. The protein resides in the extracellular matrix. Functionally, transforming growth factor beta-1 proprotein: Precursor of the Latency-associated peptide (LAP) and Transforming growth factor beta-1 (TGF-beta-1) chains, which constitute the regulatory and active subunit of TGF-beta-1, respectively. Its function is as follows. Required to maintain the Transforming growth factor beta-1 (TGF-beta-1) chain in a latent state during storage in extracellular matrix. Associates non-covalently with TGF-beta-1 and regulates its activation via interaction with 'milieu molecules', such as LTBP1, LRRC32/GARP and LRRC33/NRROS, that control activation of TGF-beta-1. Interaction with LRRC33/NRROS regulates activation of TGF-beta-1 in macrophages and microglia. Interaction with LRRC32/GARP controls activation of TGF-beta-1 on the surface of activated regulatory T-cells (Tregs). Interaction with integrins (ITGAV:ITGB6 or ITGAV:ITGB8) results in distortion of the Latency-associated peptide chain and subsequent release of the active TGF-beta-1. Multifunctional protein that regulates the growth and differentiation of various cell types and is involved in various processes, such as normal development, immune function, microglia function and responses to neurodegeneration. Activation into mature form follows different steps: following cleavage of the proprotein in the Golgi apparatus, Latency-associated peptide (LAP) and Transforming growth factor beta-1 (TGF-beta-1) chains remain non-covalently linked rendering TGF-beta-1 inactive during storage in extracellular matrix. At the same time, LAP chain interacts with 'milieu molecules', such as LTBP1, LRRC32/GARP and LRRC33/NRROS that control activation of TGF-beta-1 and maintain it in a latent state during storage in extracellular milieus. TGF-beta-1 is released from LAP by integrins (ITGAV:ITGB6 or ITGAV:ITGB8): integrin-binding to LAP stabilizes an alternative conformation of the LAP bowtie tail and results in distortion of the LAP chain and subsequent release of the active TGF-beta-1. Once activated following release of LAP, TGF-beta-1 acts by binding to TGF-beta receptors (TGFBR1 and TGFBR2), which transduce signal. While expressed by many cells types, TGF-beta-1 only has a very localized range of action within cell environment thanks to fine regulation of its activation by Latency-associated peptide chain (LAP) and 'milieu molecules'. Plays an important role in bone remodeling: acts as a potent stimulator of osteoblastic bone formation, causing chemotaxis, proliferation and differentiation in committed osteoblasts. Can promote either T-helper 17 cells (Th17) or regulatory T-cells (Treg) lineage differentiation in a concentration-dependent manner. At high concentrations, leads to FOXP3-mediated suppression of RORC and down-regulation of IL-17 expression, favoring Treg cell development. At low concentrations in concert with IL-6 and IL-21, leads to expression of the IL-17 and IL-23 receptors, favoring differentiation to Th17 cells. Stimulates sustained production of collagen through the activation of CREB3L1 by regulated intramembrane proteolysis (RIP). Mediates SMAD2/3 activation by inducing its phosphorylation and subsequent translocation to the nucleus. Positively regulates odontoblastic differentiation in dental papilla cells, via promotion of IPO7-mediated translocation of phosphorylated SMAD2 to the nucleus and subsequent transcription of target genes. Can induce epithelial-to-mesenchymal transition (EMT) and cell migration in various cell types. This chain is Transforming growth factor beta-1 proprotein (TGFB1), found in Mustela putorius furo (European domestic ferret).